Consider the following 890-residue polypeptide: Translation initiation factor IF-2 (890 aa).

Positions 45–304 (LIDHLNQKNS…LQQGFQKPAQ (260 aa)) are disordered. Positions 67–81 (STLNIPGTGGKSKSV) are enriched in polar residues. Residues 92 to 217 (VKRDPQEAER…RMAEENKWTD (126 aa)) are compositionally biased toward basic and acidic residues. Positions 252–266 (GRGRNAKAARPKKGN) are enriched in basic residues. Residues 267 to 280 (KHAESKADREEARA) are compositionally biased toward basic and acidic residues. The tr-type G domain occupies 389-558 (PRAPVVTIMG…LLQAEVLELK (170 aa)). Positions 398–405 (GHVDHGKT) are G1. Position 398-405 (398-405 (GHVDHGKT)) interacts with GTP. The segment at 423-427 (GITQH) is G2. Residues 444–447 (DTPG) are G3. GTP-binding positions include 444-448 (DTPGH) and 498-501 (NKID). The segment at 498 to 501 (NKID) is G4. The tract at residues 534 to 536 (SAK) is G5. Lys808 carries the post-translational modification N6-acetyllysine.

It belongs to the TRAFAC class translation factor GTPase superfamily. Classic translation factor GTPase family. IF-2 subfamily.

It is found in the cytoplasm. One of the essential components for the initiation of protein synthesis. Protects formylmethionyl-tRNA from spontaneous hydrolysis and promotes its binding to the 30S ribosomal subunits. Also involved in the hydrolysis of GTP during the formation of the 70S ribosomal complex. This is Translation initiation factor IF-2 from Escherichia coli (strain 55989 / EAEC).